The chain runs to 178 residues: Large ribosomal subunit protein bL25 (178 aa).

Belongs to the bacterial ribosomal protein bL25 family. CTC subfamily. As to quaternary structure, part of the 50S ribosomal subunit; part of the 5S rRNA/L5/L18/L25 subcomplex. Contacts the 5S rRNA. Binds to the 5S rRNA independently of L5 and L18.

This is one of the proteins that binds to the 5S RNA in the ribosome where it forms part of the central protuberance. The sequence is that of Large ribosomal subunit protein bL25 from Sulfurimonas denitrificans (strain ATCC 33889 / DSM 1251) (Thiomicrospira denitrificans (strain ATCC 33889 / DSM 1251)).